Reading from the N-terminus, the 55-residue chain is UPF0434 protein BPEN_388 (55 aa).

The protein belongs to the UPF0434 family.

The chain is UPF0434 protein BPEN_388 from Blochmanniella pennsylvanica (strain BPEN).